The sequence spans 369 residues: Peptide chain release factor 2 (369 aa).

N5-methylglutamine is present on Gln-249.

It belongs to the prokaryotic/mitochondrial release factor family. Methylated by PrmC. Methylation increases the termination efficiency of RF2.

Its subcellular location is the cytoplasm. Peptide chain release factor 2 directs the termination of translation in response to the peptide chain termination codons UGA and UAA. The protein is Peptide chain release factor 2 of Thermosipho africanus (strain TCF52B).